We begin with the raw amino-acid sequence, 310 residues long: Phosphoribosylaminoimidazole-succinocarboxamide synthase (310 aa).

It belongs to the SAICAR synthetase family.

The catalysed reaction is 5-amino-1-(5-phospho-D-ribosyl)imidazole-4-carboxylate + L-aspartate + ATP = (2S)-2-[5-amino-1-(5-phospho-beta-D-ribosyl)imidazole-4-carboxamido]succinate + ADP + phosphate + 2 H(+). It participates in purine metabolism; IMP biosynthesis via de novo pathway; 5-amino-1-(5-phospho-D-ribosyl)imidazole-4-carboxamide from 5-amino-1-(5-phospho-D-ribosyl)imidazole-4-carboxylate: step 1/2. The polypeptide is Phosphoribosylaminoimidazole-succinocarboxamide synthase (Dechloromonas aromatica (strain RCB)).